A 95-amino-acid polypeptide reads, in one-letter code: Large ribosomal subunit protein uL24c (95 aa).

It belongs to the universal ribosomal protein uL24 family. In terms of assembly, part of the 50S ribosomal subunit.

The protein resides in the plastid. It is found in the chloroplast. Its function is as follows. One of two assembly initiator proteins, it binds directly to the 5'-end of the 23S rRNA, where it nucleates assembly of the 50S subunit. This chain is Large ribosomal subunit protein uL24c (rpl24), found in Porphyra purpurea (Red seaweed).